A 306-amino-acid polypeptide reads, in one-letter code: tRNA pseudouridine synthase B (306 aa).

The active-site Nucleophile is the Asp-43.

This sequence belongs to the pseudouridine synthase TruB family. Type 1 subfamily.

It catalyses the reaction uridine(55) in tRNA = pseudouridine(55) in tRNA. Functionally, responsible for synthesis of pseudouridine from uracil-55 in the psi GC loop of transfer RNAs. The chain is tRNA pseudouridine synthase B from Heliobacterium modesticaldum (strain ATCC 51547 / Ice1).